The chain runs to 129 residues: Large ribosomal subunit protein bL32m (129 aa).

The N-terminal 63 residues, 1–63 (MAAMTAAAAA…LEDIWEGILR (63 aa)), are a transit peptide targeting the mitochondrion. Zn(2+) contacts are provided by cysteine 94, cysteine 97, cysteine 107, and cysteine 110.

This sequence belongs to the bacterial ribosomal protein bL32 family. In terms of assembly, component of the mitochondrial large ribosomal subunit (mt-LSU). Mature N.crassa 74S mitochondrial ribosomes consist of a small (37S) and a large (54S) subunit. The 37S small subunit contains a 16S ribosomal RNA (16S mt-rRNA) and 32 different proteins. The 54S large subunit contains a 23S rRNA (23S mt-rRNA) and 42 different proteins. bL32m has a zinc binding site. MRPL32 precursor is processed by the m-AAA protease (composed of YTA12/RCA1 and YTA10/AFG3), which cleaves the N-terminal transit peptide. Cleavage by the m-AAA protease takes place prior to assembly into the large subunit, an essential step for mitochondrial ribosome (mitoribosome) assembly. Proper processing by the m-AAA protease is dependent on the zinc-binding region within the tightly folded C-terminal domain of MRPL32: zinc-dependent folding halts degradation initiated from the N-terminus and triggers the release of mature MRPL32.

The protein localises to the mitochondrion. Its function is as follows. Component of the mitochondrial ribosome (mitoribosome), a dedicated translation machinery responsible for the synthesis of mitochondrial genome-encoded proteins, including at least some of the essential transmembrane subunits of the mitochondrial respiratory chain. The mitoribosomes are attached to the mitochondrial inner membrane and translation products are cotranslationally integrated into the membrane. The polypeptide is Large ribosomal subunit protein bL32m (mrpl32) (Neurospora crassa (strain ATCC 24698 / 74-OR23-1A / CBS 708.71 / DSM 1257 / FGSC 987)).